Here is a 314-residue protein sequence, read N- to C-terminus: Mitochondrial 2-oxoglutarate/malate carrier protein (314 aa).

Ala2 is subject to N-acetylalanine. At Ser6 the chain carries Phosphoserine. 3 Solcar repeats span residues 23 to 108 (VKFL…LFER), 117 to 208 (PGFL…SKQF), and 217 to 306 (DNIL…MNKA). Residues 24–42 (KFLFGGLAGMGATVFVQPL) traverse the membrane as a helical segment. N6-succinyllysine is present on Lys57. Lys73 carries the post-translational modification N6-acetyllysine. The chain crosses the membrane as a helical span at residues 83–101 (GLSAGLLRQATYTTTRLGI). Residue Tyr102 is modified to Phosphotyrosine. 3 helical membrane-spanning segments follow: residues 119–140 (FLLK…GTPA), 183–202 (GCIP…LASY), and 222–240 (HFCA…SMPV). The residue at position 256 (Lys256) is an N6-acetyllysine. The chain crosses the membrane as a helical span at residues 281–300 (GFTPYYARLGPHTVLTFIFL).

It belongs to the mitochondrial carrier (TC 2.A.29) family. In terms of assembly, interacts with SMIM26. In terms of tissue distribution, most highly expressed in the heart.

It is found in the mitochondrion inner membrane. It carries out the reaction (S)-malate(in) + 2-oxoglutarate(out) = (S)-malate(out) + 2-oxoglutarate(in). The catalysed reaction is malonate(in) + 2-oxoglutarate(out) = malonate(out) + 2-oxoglutarate(in). It catalyses the reaction succinate(in) + 2-oxoglutarate(out) = succinate(out) + 2-oxoglutarate(in). The enzyme catalyses maleate(in) + 2-oxoglutarate(out) = maleate(out) + 2-oxoglutarate(in). It carries out the reaction oxaloacetate(in) + 2-oxoglutarate(out) = oxaloacetate(out) + 2-oxoglutarate(in). In terms of biological role, catalyzes the transport of 2-oxoglutarate (alpha-oxoglutarate) across the inner mitochondrial membrane in an electroneutral exchange for malate. Can also exchange 2-oxoglutarate for other dicarboxylic acids such as malonate, succinate, maleate and oxaloacetate, although with lower affinity. Contributes to several metabolic processes, including the malate-aspartate shuttle, the oxoglutarate/isocitrate shuttle, in gluconeogenesis from lactate, and in nitrogen metabolism. Maintains mitochondrial fusion and fission events, and the organization and morphology of cristae. Involved in the regulation of apoptosis. Helps protect from cytotoxic-induced apoptosis by modulating glutathione levels in mitochondria. This Homo sapiens (Human) protein is Mitochondrial 2-oxoglutarate/malate carrier protein (SLC25A11).